The sequence spans 216 residues: UPF0323 lipoprotein HPG27_212 (216 aa).

A signal peptide spans 1 to 27 (MKKPYRKISDYAIVGGLSALVMVSIVG). The N-palmitoyl cysteine moiety is linked to residue cysteine 28. Cysteine 28 is lipidated: S-diacylglycerol cysteine. Polar residues predominate over residues 159–170 (QRTYKSPQAYQR). Residues 159–216 (QRTYKSPQAYQRSQNSFSKSAPSASSMGGASKGQSGFFGSSRPTSSPAVSSGTRGFNS) are disordered. A compositionally biased stretch (low complexity) spans 171-209 (SQNSFSKSAPSASSMGGASKGQSGFFGSSRPTSSPAVSS).

Belongs to the UPF0323 family.

The protein localises to the cell membrane. The polypeptide is UPF0323 lipoprotein HPG27_212 (Helicobacter pylori (strain G27)).